Here is a 186-residue protein sequence, read N- to C-terminus: MQAINLTDHFLIAMPRLEDSFFAKTLTYICEHNEQGALGLVVNRSTDLSVEKLLTQLGMSPQDPALSNLPVLLGGPVQVDNGFVLHEPVGAWRFTLSSNVVTGLTASIDILQAVADCQGPEKILVALGYSGWAAGQLEQELAQNAWLTVPAQSRILFELSFEERLPAAMKLLGIDFFNLSNEVGHA.

Belongs to the UPF0301 (AlgH) family.

The polypeptide is UPF0301 protein Neut_0448 (Nitrosomonas eutropha (strain DSM 101675 / C91 / Nm57)).